Here is a 370-residue protein sequence, read N- to C-terminus: Aminomethyltransferase (370 aa).

It belongs to the GcvT family. As to quaternary structure, the glycine cleavage system is composed of four proteins: P, T, L and H.

The catalysed reaction is N(6)-[(R)-S(8)-aminomethyldihydrolipoyl]-L-lysyl-[protein] + (6S)-5,6,7,8-tetrahydrofolate = N(6)-[(R)-dihydrolipoyl]-L-lysyl-[protein] + (6R)-5,10-methylene-5,6,7,8-tetrahydrofolate + NH4(+). The glycine cleavage system catalyzes the degradation of glycine. In Corynebacterium aurimucosum (strain ATCC 700975 / DSM 44827 / CIP 107346 / CN-1) (Corynebacterium nigricans), this protein is Aminomethyltransferase.